The sequence spans 251 residues: Aspartate/glutamate leucyltransferase (251 aa).

Belongs to the R-transferase family. Bpt subfamily.

Its subcellular location is the cytoplasm. The enzyme catalyses N-terminal L-glutamyl-[protein] + L-leucyl-tRNA(Leu) = N-terminal L-leucyl-L-glutamyl-[protein] + tRNA(Leu) + H(+). It carries out the reaction N-terminal L-aspartyl-[protein] + L-leucyl-tRNA(Leu) = N-terminal L-leucyl-L-aspartyl-[protein] + tRNA(Leu) + H(+). Its function is as follows. Functions in the N-end rule pathway of protein degradation where it conjugates Leu from its aminoacyl-tRNA to the N-termini of proteins containing an N-terminal aspartate or glutamate. This Stenotrophomonas maltophilia (strain R551-3) protein is Aspartate/glutamate leucyltransferase.